Consider the following 130-residue polypeptide: Osteocrin (130 aa).

Positions 1-25 (MLDWRLASTHFILAMIVMLWGSGKA) are cleaved as a signal peptide. Arg129 carries the post-translational modification Arginine amide.

This sequence belongs to the Osteocrin family. As to quaternary structure, interacts with NPR3. As to expression, expressed in skeletal muscle and to a much lesser extent in bone, brown adipose tissue, spleen and testis. Not expressed in neurons.

The protein resides in the secreted. Hormone that acts as a ligand for natriuretic peptide receptor NPR3/NPR-C and promotes bone growth and physical endurance in muscle. Acts as a regulator of osteoblast differentiation and bone growth by binding to natriuretic peptide receptor NPR3/NPR-C, thereby preventing binding between NPR3/NPR-C and natriuretic peptides, leading to increase cGMP production. Required to enhance physical endurance: induced following physical exercise in muscle and promotes cGMP production, probably by interacting with NPR3/NPR-C. May act as an autocrine and paracrine factor linked to glucose metabolism in skeletal muscle. In Mus musculus (Mouse), this protein is Osteocrin.